The primary structure comprises 269 residues: Enoyl-[acyl-carrier-protein] reductase [NADH] (269 aa).

NAD(+) contacts are provided by residues 20-21 (SI), 64-65 (DV), and 95-96 (IG). Residue tyrosine 158 participates in substrate binding. 2 residues coordinate NAD(+): lysine 165 and isoleucine 194.

The protein belongs to the short-chain dehydrogenases/reductases (SDR) family. FabI subfamily. Homodimer. Homotetramer.

It catalyses the reaction a 2,3-saturated acyl-[ACP] + NAD(+) = a (2E)-enoyl-[ACP] + NADH + H(+). It carries out the reaction a 2,3-saturated acyl-CoA + NAD(+) = a (2E)-enoyl-CoA + NADH + H(+). Its pathway is lipid metabolism; mycolic acid biosynthesis. Enoyl-ACP reductase of the type II fatty acid syntase (FAS-II) system, which is involved in the biosynthesis of mycolic acids, a major component of mycobacterial cell walls. Catalyzes the NADH-dependent reduction of the double bond of 2-trans-enoyl-[acyl-carrier protein], an essential step in the fatty acid elongation cycle of the FAS-II pathway. Shows preference for long-chain fatty acyl thioester substrates, and can also use 2-trans-enoyl-CoAs as alternative substrates. The mycobacterial FAS-II system utilizes the products of the FAS-I system as primers to extend fatty acyl chain lengths up to C56, forming the meromycolate chain that serves as the precursor for final mycolic acids. Functionally, is the primary target of the first-line antitubercular drug isoniazid (INH) and of the second-line drug ethionamide (ETH). Overexpressed inhA confers INH and ETH resistance to M.bovis. The mechanism of isoniazid action against InhA is covalent attachment of the activated form of the drug to the nicotinamide ring of NAD and binding of the INH-NAD adduct to the active site of InhA. Similarly, the ETH-NAD adduct binds InhA. In Mycobacterium bovis (strain ATCC BAA-935 / AF2122/97), this protein is Enoyl-[acyl-carrier-protein] reductase [NADH].